A 423-amino-acid polypeptide reads, in one-letter code: Histidine--tRNA ligase (423 aa).

The protein belongs to the class-II aminoacyl-tRNA synthetase family. Homodimer.

The protein localises to the cytoplasm. The enzyme catalyses tRNA(His) + L-histidine + ATP = L-histidyl-tRNA(His) + AMP + diphosphate + H(+). The protein is Histidine--tRNA ligase of Prochlorococcus marinus (strain MIT 9211).